A 459-amino-acid chain; its full sequence is ATP synthase subunit beta (459 aa).

Gly-147–Thr-154 is an ATP binding site.

Belongs to the ATPase alpha/beta chains family. F-type ATPases have 2 components, CF(1) - the catalytic core - and CF(0) - the membrane proton channel. CF(1) has five subunits: alpha(3), beta(3), gamma(1), delta(1), epsilon(1). CF(0) has three main subunits: a(1), b(2) and c(9-12). The alpha and beta chains form an alternating ring which encloses part of the gamma chain. CF(1) is attached to CF(0) by a central stalk formed by the gamma and epsilon chains, while a peripheral stalk is formed by the delta and b chains.

It is found in the cell inner membrane. The catalysed reaction is ATP + H2O + 4 H(+)(in) = ADP + phosphate + 5 H(+)(out). Produces ATP from ADP in the presence of a proton gradient across the membrane. The catalytic sites are hosted primarily by the beta subunits. This chain is ATP synthase subunit beta, found in Hydrogenovibrio crunogenus (strain DSM 25203 / XCL-2) (Thiomicrospira crunogena).